The following is a 329-amino-acid chain: Malate dehydrogenase (329 aa).

12 to 18 (GAAGQIG) lines the NAD(+) pocket. Substrate is bound by residues arginine 95 and arginine 101. NAD(+)-binding positions include asparagine 108, glutamine 115, and 132 to 134 (VGN). 2 residues coordinate substrate: asparagine 134 and arginine 165. Histidine 190 (proton acceptor) is an active-site residue.

It belongs to the LDH/MDH superfamily. MDH type 2 family.

It carries out the reaction (S)-malate + NAD(+) = oxaloacetate + NADH + H(+). Functionally, catalyzes the reversible oxidation of malate to oxaloacetate. In Bordetella petrii (strain ATCC BAA-461 / DSM 12804 / CCUG 43448), this protein is Malate dehydrogenase.